The sequence spans 296 residues: Cytidine deaminase (296 aa).

2 CMP/dCMP-type deaminase domains span residues 47-167 (SQDE…FGPA) and 186-296 (ESAD…VDPV). 88-90 (NLE) contacts substrate. Histidine 101 lines the Zn(2+) pocket. Catalysis depends on glutamate 103, which acts as the Proton donor. Positions 128 and 131 each coordinate Zn(2+).

Belongs to the cytidine and deoxycytidylate deaminase family. In terms of assembly, homodimer. It depends on Zn(2+) as a cofactor.

It carries out the reaction cytidine + H2O + H(+) = uridine + NH4(+). It catalyses the reaction 2'-deoxycytidine + H2O + H(+) = 2'-deoxyuridine + NH4(+). Functionally, this enzyme scavenges exogenous and endogenous cytidine and 2'-deoxycytidine for UMP synthesis. The sequence is that of Cytidine deaminase from Shewanella loihica (strain ATCC BAA-1088 / PV-4).